A 118-amino-acid polypeptide reads, in one-letter code: Peptidyl-tRNA hydrolase (118 aa).

This sequence belongs to the PTH2 family.

The protein resides in the cytoplasm. It carries out the reaction an N-acyl-L-alpha-aminoacyl-tRNA + H2O = an N-acyl-L-amino acid + a tRNA + H(+). Functionally, the natural substrate for this enzyme may be peptidyl-tRNAs which drop off the ribosome during protein synthesis. The sequence is that of Peptidyl-tRNA hydrolase from Thermococcus onnurineus (strain NA1).